The chain runs to 541 residues: Arginine-containing cyclodipeptide synthase avaA (541 aa).

The Conserved DDXXE motif motif lies at 428–432 (DDIAE).

The protein belongs to the arginine-containing cyclodipeptide synthase family.

It carries out the reaction L-tryptophyl-tRNA(Trp) + L-arginyl-tRNA(Arg) = cyclo(L-arginyl-L-tryptophyl) + tRNA(Trp) + tRNA(Arg) + H(+). It participates in secondary metabolite biosynthesis. Its function is as follows. Arginine-containing cyclodipeptide synthase; part of the cluster that mediates the biosynthesis of a highly modified cyclo-arginine-tryptophan dipeptide (cRW). Within the pathway, avaA acts as the scaffold-generating enzyme and is responsible for formation of the cyclo-Arg-Trp diketopiperazine (cRW) from L-arginyl-tRNA(Arg) + L-tryptophanyl-tRNA(Trp). AvaB then acts as a multifunctional flavoenzyme that is responsible for generating the cyclo-Arg-formylkynurenine DKP, which can be deformylated by avaC. AvaB then catalyzes an additional N-oxidation followed by cyclization and dehydration. The next step is an N-acetylation of the guanidine group catalyzed by the arginine N-acetyltransferase AvaD. The role of the additional enzymes identified within the ava cluster still have to be determined. The sequence is that of Arginine-containing cyclodipeptide synthase avaA from Aspergillus versicolor.